Here is a 250-residue protein sequence, read N- to C-terminus: Exotoxin type A (250 aa).

The signal sequence occupies residues 1–30; sequence MENNKEVLKKMVFFVLMKFLGLTILPKGIC. Cys-117 and Cys-128 form a disulfide bridge.

This sequence belongs to the staphylococcal/streptococcal toxin family.

Causative agent of the symptoms associated with scarlet fever, have been associated with streptococcal toxic shock-like disease and may play a role in the early events of rheumatic fever. The polypeptide is Exotoxin type A (speA) (Streptococcus pyogenes).